Here is a 166-residue protein sequence, read N- to C-terminus: Ribosome maturation factor RimM (166 aa).

Positions 94-166 (EDEFYITDLN…AILNYKRDEL (73 aa)) constitute a PRC barrel domain.

Belongs to the RimM family. As to quaternary structure, binds ribosomal protein uS19.

It localises to the cytoplasm. Its function is as follows. An accessory protein needed during the final step in the assembly of 30S ribosomal subunit, possibly for assembly of the head region. Essential for efficient processing of 16S rRNA. May be needed both before and after RbfA during the maturation of 16S rRNA. It has affinity for free ribosomal 30S subunits but not for 70S ribosomes. The sequence is that of Ribosome maturation factor RimM from Rickettsia bellii (strain RML369-C).